The sequence spans 357 residues: MKLKKFLVLLLIPFLYACSSDRSGNYDDAFAKDTNGLDLLTGQFSQNIDQIWGVNELLVASRKDYVKYTDSYYTRSHISFEEGQITIETLADANRLHSAIVHTLLMGSDAKGIDLFASGDVPISSRPFLVGQVVDNFGRQINNIDVANSFASYLLQNRLQSRRLSNGRTVQFVSIQMIANHVNVRARKYLSLVRQASRRYGIDESLILGIMQTESSFNPYAISYANAMGLMQVVPHTAGRDIFKLKGRSGQPSKSYLFDPANNIDAGVSYLWILKNEYLAGITNPTSMRYAMISAYNSGAGAVLRVFDSDQEYAINIINRMQPEQVYRILTTVHPSSQARNYLLKVDKAQRSYRRAR.

A signal peptide spans 1–17 (MKLKKFLVLLLIPFLYA). Cys18 carries the N-palmitoyl cysteine lipid modification. The S-diacylglycerol cysteine moiety is linked to residue Cys18.

The protein belongs to the transglycosylase Slt family.

Its subcellular location is the cell outer membrane. The enzyme catalyses Exolytic cleavage of the (1-&gt;4)-beta-glycosidic linkage between N-acetylmuramic acid (MurNAc) and N-acetylglucosamine (GlcNAc) residues in peptidoglycan, from either the reducing or the non-reducing ends of the peptidoglycan chains, with concomitant formation of a 1,6-anhydrobond in the MurNAc residue.. Functionally, murein-degrading enzyme. May play a role in recycling of muropeptides during cell elongation and/or cell division. The polypeptide is Membrane-bound lytic murein transglycosylase C (Mannheimia succiniciproducens (strain KCTC 0769BP / MBEL55E)).